The following is a 413-amino-acid chain: Probable elongation factor 1-gamma 2 (413 aa).

Residues 1–82 (MALVMHTYKG…YVSRKNGDNS (82 aa)) enclose the GST N-terminal domain. A GST C-terminal domain is found at 87–215 (SLIEYAHIEQ…AKQTEAVPPV (129 aa)). The tract at residues 207 to 260 (KQTEAVPPVPTKKAPQPAKPKEEPKKAAPVAEAPKPAEEEEAPKPKAKNPLDLL) is disordered. One can recognise an EF-1-gamma C-terminal domain in the interval 253–413 (AKNPLDLLPP…EALLDAKCFK (161 aa)).

In terms of assembly, EF-1 is composed of four subunits: alpha, beta, delta, and gamma.

Its function is as follows. Probably plays a role in anchoring the complex to other cellular components. The sequence is that of Probable elongation factor 1-gamma 2 from Arabidopsis thaliana (Mouse-ear cress).